The chain runs to 122 residues: Large ribosomal subunit protein uL14c (122 aa).

This sequence belongs to the universal ribosomal protein uL14 family. In terms of assembly, part of the 50S ribosomal subunit.

Its subcellular location is the plastid. Functionally, binds to 23S rRNA. The protein is Large ribosomal subunit protein uL14c (rpl14) of Helicosporidium sp. subsp. Simulium jonesii (Green alga).